The chain runs to 56 residues: Ovomucoid (56 aa).

The 51-residue stretch at 6–56 folds into the Kazal-like domain; it reads VDCSEYPKPDCTLEYRPLCGSDNKTYANKCNFCNAVVESNGTLTLSHFGKC. 3 cysteine pairs are disulfide-bonded: Cys8–Cys38, Cys16–Cys35, and Cys24–Cys56. Asn45 is a glycosylation site (N-linked (GlcNAc...) asparagine).

The protein resides in the secreted. The chain is Ovomucoid from Callipepla squamata castanogastris (Chestnut bellied scaled quail).